Reading from the N-terminus, the 331-residue chain is MQTSHYAAEKDMQDAAPRLTFTLRDEERLMMKIGVFVPIGNNGWLISTHAPQYMPTFELNKAIVQKAEHYHFDFALSMIKLRGFGGKTEFWDHNLESFTLMAGLAAVTSRIQIYATAATLTLPPAIVARMAATIDSISGGRFGVNLVTGWQKPEYEQMGIWPGDDYFSRRYDYLTEYVQVLRDLWGTGKSDFKGDFFTMNDCRVSPQPSVPMKVICAGQSDAGMAFSAQYADFNFCFGKGVNTPTAFAPTAARMKQAAEQTGRDVGSYVLFMVIADETDDAARTKWEHYKAGADEEALSWLTEQSQKDTRSGTDTNVRQMADPTSASAFNH.

FMN contacts are provided by residues 79 to 80 (IK), Asn-145, Glu-154, 170 to 171 (RY), and Ser-220. Residues 300–331 (WLTEQSQKDTRSGTDTNVRQMADPTSASAFNH) form a disordered region. The span at 312 to 331 (GTDTNVRQMADPTSASAFNH) shows a compositional bias: polar residues.

Belongs to the NtaA/SnaA/DszA monooxygenase family. RutA subfamily.

The enzyme catalyses uracil + FMNH2 + NADH + O2 = (Z)-3-ureidoacrylate + FMN + NAD(+) + H2O + H(+). The catalysed reaction is thymine + FMNH2 + NADH + O2 = (Z)-2-methylureidoacrylate + FMN + NAD(+) + H2O + H(+). Functionally, catalyzes the pyrimidine ring opening between N-3 and C-4 by an unusual flavin hydroperoxide-catalyzed mechanism, adding oxygen atoms in the process to yield ureidoacrylate peracid, that immediately reacts with FMN forming ureidoacrylate and FMN-N(5)-oxide. The FMN-N(5)-oxide reacts spontaneously with NADH to produce FMN. Requires the flavin reductase RutF to regenerate FMN in vivo. The sequence is that of Pyrimidine monooxygenase RutA from Escherichia coli O7:K1 (strain IAI39 / ExPEC).